Consider the following 952-residue polypeptide: Germ layers disorganized gldi-3 (952 aa).

The 62-residue stretch at 39–100 folds into the FHA domain; that stretch reads KSFGRATTND…NGTYINDRRL (62 aa). Disordered regions lie at residues 174 to 220, 483 to 639, and 652 to 866; these read IGPR…MPST, GTPK…ESTV, and AAQS…KERC. Composition is skewed to polar residues over residues 179-195 and 202-220; these read PSTTNKVLQQEADSTNG and NRASSASSATPEDTQMPST. Residues 523–537 show a composition bias toward acidic residues; the sequence is EESEILDVVGTDEPD. The segment covering 553 to 568 has biased composition (basic and acidic residues); that stretch reads PEDHGRQTQNKIDKNV. Composition is skewed to polar residues over residues 569–584 and 600–620; these read RMSSTPRIDAQSTPSA and VTSSKSAQDVSTPSTTPNPVS. The span at 662–679 shows a compositional bias: low complexity; sequence SVSNTTSSTSASLTTSSV. Positions 685–706 are enriched in basic and acidic residues; it reads TSSKENTDQKRAVDDSSDESAR. Positions 715-724 are enriched in low complexity; sequence SATPSSTPAE. Residues 725–742 show a composition bias toward basic and acidic residues; sequence SSKRKQKDTSSRKMKQLD. Positions 761–772 are enriched in basic residues; it reads TKRRDKARRSTR. Over residues 789–800 the composition is skewed to acidic residues; the sequence is VEDEDETDDVQE. 2 stretches are compositionally biased toward basic and acidic residues: residues 823–832 and 856–866; these read IKERKTKDKD and PPKTEPSKERC.

The protein resides in the nucleus. Functionally, potential transcription factor that may play a role in the regulation of genes involved in cell cycle G1/S transition. May bind to regulatory elements of genes. The chain is Germ layers disorganized gldi-3 from Caenorhabditis elegans.